We begin with the raw amino-acid sequence, 300 residues long: Geranylgeranyl pyrophosphate synthase (300 aa).

At Met1 the chain carries N-acetylmethionine. 3 residues coordinate isopentenyl diphosphate: Lys25, Arg28, and His57. 2 residues coordinate Mg(2+): Asp64 and Asp68. Arg73 serves as a coordination point for dimethylallyl diphosphate. Isopentenyl diphosphate is bound at residue Arg74. Positions 151, 152, 185, 202, and 212 each coordinate dimethylallyl diphosphate.

The protein belongs to the FPP/GGPP synthase family. In terms of assembly, homohexamer; trimer of homodimers. Mg(2+) serves as cofactor.

The protein localises to the cytoplasm. It localises to the perinuclear region. Its subcellular location is the myofibril. It is found in the sarcomere. The protein resides in the z line. It catalyses the reaction isopentenyl diphosphate + dimethylallyl diphosphate = (2E)-geranyl diphosphate + diphosphate. The catalysed reaction is isopentenyl diphosphate + (2E)-geranyl diphosphate = (2E,6E)-farnesyl diphosphate + diphosphate. It carries out the reaction isopentenyl diphosphate + (2E,6E)-farnesyl diphosphate = (2E,6E,10E)-geranylgeranyl diphosphate + diphosphate. It participates in isoprenoid biosynthesis; farnesyl diphosphate biosynthesis; farnesyl diphosphate from geranyl diphosphate and isopentenyl diphosphate: step 1/1. The protein operates within isoprenoid biosynthesis; geranyl diphosphate biosynthesis; geranyl diphosphate from dimethylallyl diphosphate and isopentenyl diphosphate: step 1/1. Its pathway is isoprenoid biosynthesis; geranylgeranyl diphosphate biosynthesis; geranylgeranyl diphosphate from farnesyl diphosphate and isopentenyl diphosphate: step 1/1. Functionally, catalyzes the trans-addition of the three molecules of IPP onto DMAPP to form geranylgeranyl pyrophosphate, an important precursor of carotenoids and geranylated proteins. The chain is Geranylgeranyl pyrophosphate synthase (GGPS1) from Bos taurus (Bovine).